Here is a 288-residue protein sequence, read N- to C-terminus: 4-hydroxybenzoate octaprenyltransferase (288 aa).

The next 8 helical transmembrane spans lie at 23-43 (IGSLLLLWPTLWALWLAGRGI), 46-66 (AKILVVFVLGVFFMRAAGCVV), 98-118 (ILFVVLILLSFGLVLTLNSMT), 141-161 (LPQVVLGAAFGWSIPMGFAAV), 163-183 (ESLPLVCWLLLLANICWTVAY), 213-233 (LIIGLLQLATLLLMVAIGWLM), 234-254 (NLGGAFYWSILLAGALFTHQQ), and 268-288 (AFLNNNYVGLVLFLGILISYW).

The protein belongs to the UbiA prenyltransferase family. Requires Mg(2+) as cofactor.

The protein resides in the cell inner membrane. It catalyses the reaction all-trans-octaprenyl diphosphate + 4-hydroxybenzoate = 4-hydroxy-3-(all-trans-octaprenyl)benzoate + diphosphate. Its pathway is cofactor biosynthesis; ubiquinone biosynthesis. Its function is as follows. Catalyzes the prenylation of para-hydroxybenzoate (PHB) with an all-trans polyprenyl group. Mediates the second step in the final reaction sequence of ubiquinone-8 (UQ-8) biosynthesis, which is the condensation of the polyisoprenoid side chain with PHB, generating the first membrane-bound Q intermediate 3-octaprenyl-4-hydroxybenzoate. The protein is 4-hydroxybenzoate octaprenyltransferase of Yersinia pestis bv. Antiqua (strain Antiqua).